The following is a 424-amino-acid chain: Vasopressin V1b receptor (424 aa).

Residues 1-22 (MDSGPLWDANPTPRGTLSAPNA) are disordered. At 1–35 (MDSGPLWDANPTPRGTLSAPNATTPWLGRDEELAK) the chain is on the extracellular side. A compositionally biased stretch (polar residues) spans 13–22 (PRGTLSAPNA). Residue Asn-21 is glycosylated (N-linked (GlcNAc...) asparagine). The chain crosses the membrane as a helical span at residues 36 to 59 (VEIGVLATVLVLATGGNLAVLLTL). Residues 60–71 (GQLGRKRSRMHL) are Cytoplasmic-facing. The chain crosses the membrane as a helical span at residues 72–93 (FVLHLALTDLAVALFQVLPQLL). At 94-108 (WDITYRFQGPDLLCR) the chain is on the extracellular side. A disulfide bond links Cys-107 and Cys-186. Residues 109–130 (AVKYLQVLSMFASTYMLLAMTL) form a helical membrane-spanning segment. The Cytoplasmic portion of the chain corresponds to 131-151 (DRYLAVCHPLRSLQQPGQSTY). The chain crosses the membrane as a helical span at residues 152–173 (LLIAAPWLLAAIFSLPQVFIFS). Residues 174–201 (LREVIQGSGVLDCWADFGFPWGPRAYLT) lie on the Extracellular side of the membrane. Residues 202–222 (WTTLAIFVLPVTMLTACYSLI) traverse the membrane as a helical segment. The Cytoplasmic portion of the chain corresponds to 223 to 283 (CHEICKNLKV…RAKIRTVKMT (61 aa)). A helical membrane pass occupies residues 284 to 303 (FVIVLAYIACWAPFFSVQMW). Residues 304-321 (SVWDKNAPDEDSTNVAFT) are Extracellular-facing. A helical transmembrane segment spans residues 322–341 (ISMLLGNLNSCCNPWIYMGF). Over 342 to 424 (NSHLLPRPLR…GEGTAETIIF (83 aa)) the chain is Cytoplasmic. Positions 398-417 (SGRPRPEESPRDLELADGEG) are disordered. Positions 401-411 (PRPEESPRDLE) are enriched in basic and acidic residues.

It belongs to the G-protein coupled receptor 1 family. Vasopressin/oxytocin receptor subfamily.

The protein localises to the cell membrane. Functionally, receptor for arginine vasopressin. The activity of this receptor is mediated by G proteins which activate a phosphatidyl-inositol-calcium second messenger system. Its function is as follows. (Microbial infection) During SARS coronavirus-2/SARS-CoV-2 infection, may recognize and internalize the complex formed by AVP/Arg-vasopressin, SARS-CoV-2 spike protein and secreted ACE2 through DNM2/dynamin 2-dependent endocytosis. The sequence is that of Vasopressin V1b receptor from Homo sapiens (Human).